The following is a 336-amino-acid chain: Gastrula zinc finger protein XlCGF57.1 (336 aa).

11 consecutive C2H2-type zinc fingers follow at residues 6-28 (YTCTECGKGFIKKSRLVTHMKIH), 34-56 (FICTECGKGFSQKGILQTHMKTH), 62-84 (FTCTECGKNFAQITTLLRHLTIH), 90-112 (FSCTECGKHFAHKGHLVSHMKTH), 118-140 (FTCTECGKHFAQKGHLVSHMKTH), 146-168 (FTCTECGKNFAQKTNLLCHLKIH), 174-196 (FTCTECGDKFAKKNNLLRHLKIH), 202-224 (FTCTECGKAFTLKGSLVGHMKIH), 230-252 (FSCTQCGKNFTQKNSLLCHLTMH), 258-280 (FTCTECGKGFALKGNLVLHTKIH), and 286-308 (FSCTQCGKNFAQKNSLLRHLKIH).

The protein belongs to the krueppel C2H2-type zinc-finger protein family.

The protein resides in the nucleus. May be involved in transcriptional regulation. The sequence is that of Gastrula zinc finger protein XlCGF57.1 from Xenopus laevis (African clawed frog).